A 497-amino-acid polypeptide reads, in one-letter code: Ankyrin repeat domain-containing protein 53 (497 aa).

Basic residues predominate over residues 1 to 10 (MRRPSRRRSK). The tract at residues 1-65 (MRRPSRRRSK…VSSPNSESSQ (65 aa)) is disordered. The segment covering 12 to 27 (STPPRSHTTPRRTGPS) has biased composition (low complexity). Basic and acidic residues predominate over residues 28 to 39 (DSRRRPGTKEQP). 3 ANK repeats span residues 110 to 140 (KGFT…PVDL), 144 to 177 (KGQT…AINS), and 181 to 210 (NGST…NVHA). The stretch at 239 to 264 (WKHDKKVLAQEMEKLRTLKEKLTILE) forms a coiled coil.

As to quaternary structure, interacts with PSRC1; recruited by PSRC1 to the spindle during mitosis. Post-translationally, phosphorylated during mitosis.

It localises to the cytoplasm. Its subcellular location is the cytoskeleton. The protein localises to the spindle. The protein resides in the spindle pole. In terms of biological role, required for normal progression through mitosis. Involved in chromosome alignment and cytokinesis via regulation of microtubules polymerization. The sequence is that of Ankyrin repeat domain-containing protein 53 (Ankrd53) from Mus musculus (Mouse).